The chain runs to 382 residues: Mannitol-1-phosphate 5-dehydrogenase (382 aa).

An NAD(+)-binding site is contributed by 3–14 (ALHFGAGNIGRG).

It belongs to the mannitol dehydrogenase family.

It catalyses the reaction D-mannitol 1-phosphate + NAD(+) = beta-D-fructose 6-phosphate + NADH + H(+). This is Mannitol-1-phosphate 5-dehydrogenase from Salmonella typhi.